A 313-amino-acid polypeptide reads, in one-letter code: tRNA dimethylallyltransferase (313 aa).

Residue 10–17 (GPTASGKT) coordinates ATP. 12 to 17 (TASGKT) lines the substrate pocket. Interaction with substrate tRNA regions lie at residues 35-38 (DSAM), 159-163 (QRIQR), and 240-245 (RCVGYR).

It belongs to the IPP transferase family. Monomer. Requires Mg(2+) as cofactor.

The catalysed reaction is adenosine(37) in tRNA + dimethylallyl diphosphate = N(6)-dimethylallyladenosine(37) in tRNA + diphosphate. Functionally, catalyzes the transfer of a dimethylallyl group onto the adenine at position 37 in tRNAs that read codons beginning with uridine, leading to the formation of N6-(dimethylallyl)adenosine (i(6)A). The polypeptide is tRNA dimethylallyltransferase (Legionella pneumophila (strain Paris)).